The following is a 56-amino-acid chain: Large ribosomal subunit protein bL32 (56 aa).

A disordered region spans residues 1–29 (MAVQQNKPSRSKRGMRRSHDALTTSSVSV).

The protein belongs to the bacterial ribosomal protein bL32 family.

The protein is Large ribosomal subunit protein bL32 of Pectobacterium atrosepticum (strain SCRI 1043 / ATCC BAA-672) (Erwinia carotovora subsp. atroseptica).